The chain runs to 290 residues: Ribonuclease HIII (290 aa).

In terms of domain architecture, RNase H type-2 spans 78-290 (LPLIGTDEVG…FKNTEKAKNA (213 aa)). 3 residues coordinate a divalent metal cation: Asp84, Glu85, and Asp187.

Belongs to the RNase HII family. RnhC subfamily. Mn(2+) serves as cofactor. Requires Mg(2+) as cofactor.

It is found in the cytoplasm. It catalyses the reaction Endonucleolytic cleavage to 5'-phosphomonoester.. Endonuclease that specifically degrades the RNA of RNA-DNA hybrids. In Streptococcus pneumoniae (strain P1031), this protein is Ribonuclease HIII.